A 602-amino-acid chain; its full sequence is Transcription termination factor Rho (602 aa).

2 disordered regions span residues 1-35 (MTDT…EPAG) and 76-216 (ANGA…AEAE). Positions 85-96 (SAQEHDKGDRPP) are enriched in basic and acidic residues. Residues 100–120 (APATQGEQTPTEQIDSQSQQV) show a composition bias toward polar residues. Residues 172-182 (GDQQASGGQQA) are compositionally biased toward low complexity. Residues 183–192 (RGDEDGEARQ) are compositionally biased toward basic and acidic residues. Positions 193–206 (GRRGRRFRDRRRRG) are enriched in basic residues. The Rho RNA-BD domain occupies 223–301 (VQPVAGILDV…VRLDSINGGS (79 aa)). Residues 344–349 (GKGQRA), 356–361 (KAGKTT), and Arg-387 contribute to the ATP site.

Belongs to the Rho family. In terms of assembly, homohexamer. The homohexamer assembles into an open ring structure.

Facilitates transcription termination by a mechanism that involves Rho binding to the nascent RNA, activation of Rho's RNA-dependent ATPase activity, and release of the mRNA from the DNA template. This chain is Transcription termination factor Rho, found in Mycobacterium bovis (strain ATCC BAA-935 / AF2122/97).